A 184-amino-acid chain; its full sequence is MSEIVSVSGGPTKPEIIAVSLSKLGLKDGDRFADVGCGTGSVSIEAARIARNLTIYAIDARKEALLATETNFKNFGIENARILAGEASDILGSEKTIDSIDCAFVGGTKNIGSILAKLVEKKARSIVVNAVRIETVVRTIEAMKSLDIFDEVIHVAVSRSFPIAGETMFKPENPVYIVVGKKQS.

S-adenosyl-L-methionine-binding positions include Thr-12, 36-40 (GCGTG), Asp-59, and Ala-87.

It belongs to the methyltransferase superfamily. Archaeal-type CbiT family.

The catalysed reaction is Co-precorrin-6B + S-adenosyl-L-methionine = Co-precorrin-7 + S-adenosyl-L-homocysteine + CO2. It functions in the pathway cofactor biosynthesis; adenosylcobalamin biosynthesis; cob(II)yrinate a,c-diamide from sirohydrochlorin (anaerobic route): step 8/10. Functionally, catalyzes the methylation of C-15 in cobalt-precorrin-6B followed by the decarboxylation of C-12 to form cobalt-precorrin-7. This is Probable cobalt-precorrin-6B C(15)-methyltransferase (decarboxylating) from Methanosarcina mazei (strain ATCC BAA-159 / DSM 3647 / Goe1 / Go1 / JCM 11833 / OCM 88) (Methanosarcina frisia).